Here is a 192-residue protein sequence, read N- to C-terminus: Epoxyqueuosine reductase QueH (192 aa).

Cys-9, Cys-10, Cys-87, and Cys-90 together coordinate [4Fe-4S] cluster. A disulfide bond links Cys-169 and Cys-171.

It belongs to the QueH family.

It carries out the reaction epoxyqueuosine(34) in tRNA + AH2 = queuosine(34) in tRNA + A + H2O. It participates in tRNA modification; tRNA-queuosine biosynthesis. Catalyzes the conversion of epoxyqueuosine (oQ) to queuosine (Q), which is a hypermodified base found in the wobble positions of tRNA(Asp), tRNA(Asn), tRNA(His) and tRNA(Tyr). This is Epoxyqueuosine reductase QueH from Thermotoga maritima (strain ATCC 43589 / DSM 3109 / JCM 10099 / NBRC 100826 / MSB8).